The primary structure comprises 305 residues: Beta-lactamase (305 aa).

The segment at residues 1–34 (MGTTGARPSRRAVLTAAAGAAVAGIPLGGSTAFA) is a signal peptide (tat-type signal). S82 (acyl-ester intermediate) is an active-site residue. 250–252 (KTG) provides a ligand contact to substrate.

It belongs to the class-A beta-lactamase family. Predicted to be exported by the Tat system. The position of the signal peptide cleavage has not been experimentally proven.

The catalysed reaction is a beta-lactam + H2O = a substituted beta-amino acid. The chain is Beta-lactamase from Streptomyces lavendulae.